Consider the following 443-residue polypeptide: Nuclear hormone receptor family member nhr-60 (443 aa).

The segment covering 1–20 has biased composition (low complexity); sequence MIQSSSSISQDSLDLPSILS. Residues 1 to 40 are disordered; it reads MIQSSSSISQDSLDLPSILSTFSADEPEDEPSPTAVKSTK. The segment at residues 44–121 is a DNA-binding region (nuclear receptor); it reads PTECLICGNS…VGMNPLAMEV (78 aa). NR C4-type zinc fingers lie at residues 47–67 and 83–104; these read CLICGNSANGHHYDVASCNGC and CKAKGDCFDLTKRKVPLKCRAC. The region spanning 196-439 is the NR LBD domain; it reads NEFSGLEYLL…KDLVMRVIED (244 aa). The interval 225-249 is disordered; the sequence is LRRDQLGPPRLPKPPSPGKPRDSQH. Pro residues predominate over residues 233 to 242; it reads PRLPKPPSPG.

It belongs to the nuclear hormone receptor family.

The protein localises to the nucleus. Its function is as follows. Orphan nuclear receptor (Potential). Required for embryonic and larval morphogenesis and probably for seam cell positioning and migration. The polypeptide is Nuclear hormone receptor family member nhr-60 (Caenorhabditis elegans).